The chain runs to 307 residues: Lactamase-like protein vrtG (307 aa).

Zn(2+) is bound by residues His97, His99, Asp101, and His102. The Proton donor/acceptor role is filled by Asp101.

Belongs to the metallo-beta-lactamase superfamily. Zn(2+) serves as cofactor.

It functions in the pathway secondary metabolite biosynthesis; terpenoid biosynthesis. Lactamase-like protein; part of the gene cluster that mediates the biosynthesis of viridicatumtoxin, a tetracycline-like fungal meroterpenoid with a unique, fused spirobicyclic ring system. The first step of the pathway is the production of the malonamoyl-CoA starter unit for the polyketide synthase vrtA. The aldolase vrtJ may be involved in the synthesis of the malonamate substrate for malonamoyl-CoA synthetase vrtB. The polyketide synthase vrtA then may utilize the malonamoyl-CoA starter unit, followed by sequential condensation of eight malonyl-CoA units to form the polyketide backbone. The cyclization of the last ring could be mediated by the lactamase-like protein vrtG. The proposed post-PKS tailoring steps are a hydroxylation at C5 catalyzed the cytochrome P450 monooxygenase vrtE, a hydroxylation at C12a catalyzed by VrtH and/or VrtI, and an O-methylation by the O-methyltransferase vrtF. VrtC is then proposed to catalyze the transfer of a geranyl group synthesized by vrtD to the aromatic C ring of the tetracyclic polyketide intermediate of viridicatumtoxin to yield previridicatumtoxin. Finally, the cytochrome P450 monooxygenase vrtK catalyzes the spirocyclization of the geranyl moiety of previridicatumtoxin to afford viridicatumtoxin. This is Lactamase-like protein vrtG from Penicillium aethiopicum.